The sequence spans 265 residues: MKVKSFAKIDLGYSVYKKQKNFTKHDFESIFILVENIYDDIEITKIEKNIDDVHYYNETNEIYVYSRLVHKTLEWIRHTYHIKNHYRINIKKRIPIGAGLGGGSSNAAAIMKYILEFEGIKEINYKDVVNKLGADIPFFLSGYKTAYISDYGSVLEDLTGQFKLNYEVYLMNVNVNTKIVFEKFDDNSWHVIKNNFKTIIKNLKENIVVNIHNDLQEYCFELYPNIKYKYNELLSDGFYTILSGAGSSFIRIKLKNKEDLIINEN.

Lysine 8 is an active-site residue. ATP is bound at residue 95-105 (PIGAGLGGGSS). Aspartate 135 is a catalytic residue.

This sequence belongs to the GHMP kinase family. IspE subfamily.

It catalyses the reaction 4-CDP-2-C-methyl-D-erythritol + ATP = 4-CDP-2-C-methyl-D-erythritol 2-phosphate + ADP + H(+). It participates in isoprenoid biosynthesis; isopentenyl diphosphate biosynthesis via DXP pathway; isopentenyl diphosphate from 1-deoxy-D-xylulose 5-phosphate: step 3/6. Catalyzes the phosphorylation of the position 2 hydroxy group of 4-diphosphocytidyl-2C-methyl-D-erythritol. This Ureaplasma parvum serovar 3 (strain ATCC 27815 / 27 / NCTC 11736) protein is 4-diphosphocytidyl-2-C-methyl-D-erythritol kinase.